A 619-amino-acid chain; its full sequence is Dynein axonemal intermediate chain 2 (619 aa).

WD repeat units lie at residues 214 to 254, 261 to 302, 362 to 401, 405 to 445, and 450 to 489; these read KPSS…LVAE, SHRD…EPTE, GHHG…SSIM, YHMA…CDPA, and VCDD…STLQ. The disordered stretch occupies residues 566-619; sequence EALKKKPKPKKASIEVEGEDELEDIAGEEEESGIIMGEDTGEDDMDEKNEGGAP. Residues 581-597 show a composition bias toward acidic residues; that stretch reads VEGEDELEDIAGEEEES.

Belongs to the dynein intermediate chain family. In terms of assembly, consists of at least two heavy chains and a number of intermediate and light chains. Interacts with DNAAF2. Interacts with DNAAF6/PIH1D3. Interacts with HEATR2; probably involved in outer arm dynein assembly. Interacts with CFAP53.

It localises to the cytoplasm. It is found in the cytoskeleton. The protein resides in the cilium axoneme. Its subcellular location is the dynein axonemal particle. Functionally, part of the dynein complex of respiratory cilia. The chain is Dynein axonemal intermediate chain 2 (Dnai2) from Rattus norvegicus (Rat).